The following is a 373-amino-acid chain: UDP-N-acetylglucosamine--N-acetylmuramyl-(pentapeptide) pyrophosphoryl-undecaprenol N-acetylglucosamine transferase (373 aa).

Residues 10 to 12 (TGG), N124, R166, S196, and Q301 contribute to the UDP-N-acetyl-alpha-D-glucosamine site.

The protein belongs to the glycosyltransferase 28 family. MurG subfamily.

The protein resides in the cell membrane. The enzyme catalyses di-trans,octa-cis-undecaprenyl diphospho-N-acetyl-alpha-D-muramoyl-L-alanyl-D-glutamyl-meso-2,6-diaminopimeloyl-D-alanyl-D-alanine + UDP-N-acetyl-alpha-D-glucosamine = di-trans,octa-cis-undecaprenyl diphospho-[N-acetyl-alpha-D-glucosaminyl-(1-&gt;4)]-N-acetyl-alpha-D-muramoyl-L-alanyl-D-glutamyl-meso-2,6-diaminopimeloyl-D-alanyl-D-alanine + UDP + H(+). The protein operates within cell wall biogenesis; peptidoglycan biosynthesis. Cell wall formation. Catalyzes the transfer of a GlcNAc subunit on undecaprenyl-pyrophosphoryl-MurNAc-pentapeptide (lipid intermediate I) to form undecaprenyl-pyrophosphoryl-MurNAc-(pentapeptide)GlcNAc (lipid intermediate II). This is UDP-N-acetylglucosamine--N-acetylmuramyl-(pentapeptide) pyrophosphoryl-undecaprenol N-acetylglucosamine transferase from Desulforudis audaxviator (strain MP104C).